Reading from the N-terminus, the 555-residue chain is MFS-type transporter VdtG (555 aa).

The segment at 1–20 is disordered; it reads MNGNGTADKPGPPGGKPFGP. Asparagine 4 is a glycosylation site (N-linked (GlcNAc...) asparagine). The next 3 membrane-spanning stretches (helical) occupy residues 30–50, 71–91, and 101–121; these read TGFK…LTAL, DIGW…LLFG, and WVFL…GAAP. A glycan (N-linked (GlcNAc...) asparagine) is linked at asparagine 122. Transmembrane regions (helical) follow at residues 132-152 and 162-182; these read IAGL…FFTV and GIAG…GGGF. Residue asparagine 185 is glycosylated (N-linked (GlcNAc...) asparagine). 4 helical membrane-spanning segments follow: residues 190–210, 232–252, 262–282, and 304–324; these read WCFY…LLFL, LGNL…QWGG, IVAL…VQLW, and AFTI…PIWF. Asparagine 329 carries N-linked (GlcNAc...) asparagine glycosylation. 5 helical membrane-spanning segments follow: residues 337 to 357, 364 to 384, 393 to 413, 425 to 445, and 497 to 517; these read VMML…GFII, TPFM…LTTF, WIGY…QASL, PIGI…FLAV, and LMDV…AAAF. Residues 528–555 form a disordered region; sequence AAGPGGPGGPGGPGGPGGPEGLRGGNKV. A compositionally biased stretch (gly residues) spans 530 to 555; that stretch reads GPGGPGGPGGPGGPGGPEGLRGGNKV.

This sequence belongs to the major facilitator superfamily. TCR/Tet family.

The protein resides in the endoplasmic reticulum membrane. In terms of biological role, MFS-type transporter; part of the gene cluster that mediates the biosynthesis of viriditoxin, one of the 'classical' secondary metabolites produced by fungi and that has antibacterial activity. Is not essential for viriditoxin production. The chain is MFS-type transporter VdtG from Byssochlamys spectabilis (Paecilomyces variotii).